A 298-amino-acid polypeptide reads, in one-letter code: Glycine--tRNA ligase alpha subunit (298 aa).

The protein belongs to the class-II aminoacyl-tRNA synthetase family. In terms of assembly, tetramer of two alpha and two beta subunits.

The protein resides in the cytoplasm. The catalysed reaction is tRNA(Gly) + glycine + ATP = glycyl-tRNA(Gly) + AMP + diphosphate. The protein is Glycine--tRNA ligase alpha subunit of Gloeothece citriformis (strain PCC 7424) (Cyanothece sp. (strain PCC 7424)).